Here is a 569-residue protein sequence, read N- to C-terminus: Urease subunit alpha (569 aa).

One can recognise a Urease domain in the interval 131-569 (GGMDAHIHFI…LPMAQRYFLF (439 aa)). 3 residues coordinate Ni(2+): histidine 136, histidine 138, and lysine 218. Residue lysine 218 is modified to N6-carboxylysine. Histidine 220 contacts substrate. Histidine 247 and histidine 273 together coordinate Ni(2+). The active-site Proton donor is the histidine 321. Aspartate 361 contacts Ni(2+).

The protein belongs to the metallo-dependent hydrolases superfamily. Urease alpha subunit family. Heterotrimer of UreA (gamma), UreB (beta) and UreC (alpha) subunits. Three heterotrimers associate to form the active enzyme. Ni cation is required as a cofactor. Carboxylation allows a single lysine to coordinate two nickel ions.

Its subcellular location is the cytoplasm. The catalysed reaction is urea + 2 H2O + H(+) = hydrogencarbonate + 2 NH4(+). It participates in nitrogen metabolism; urea degradation; CO(2) and NH(3) from urea (urease route): step 1/1. In Rhizobium rhizogenes (strain K84 / ATCC BAA-868) (Agrobacterium radiobacter), this protein is Urease subunit alpha.